The sequence spans 437 residues: tRNA(Ile)-lysidine synthase (437 aa).

Residue 22-27 (SGGLDS) participates in ATP binding.

The protein belongs to the tRNA(Ile)-lysidine synthase family.

Its subcellular location is the cytoplasm. The catalysed reaction is cytidine(34) in tRNA(Ile2) + L-lysine + ATP = lysidine(34) in tRNA(Ile2) + AMP + diphosphate + H(+). In terms of biological role, ligates lysine onto the cytidine present at position 34 of the AUA codon-specific tRNA(Ile) that contains the anticodon CAU, in an ATP-dependent manner. Cytidine is converted to lysidine, thus changing the amino acid specificity of the tRNA from methionine to isoleucine. In Xylella fastidiosa (strain Temecula1 / ATCC 700964), this protein is tRNA(Ile)-lysidine synthase.